A 150-amino-acid chain; its full sequence is SsrA-binding protein (150 aa).

It belongs to the SmpB family.

It is found in the cytoplasm. In terms of biological role, required for rescue of stalled ribosomes mediated by trans-translation. Binds to transfer-messenger RNA (tmRNA), required for stable association of tmRNA with ribosomes. tmRNA and SmpB together mimic tRNA shape, replacing the anticodon stem-loop with SmpB. tmRNA is encoded by the ssrA gene; the 2 termini fold to resemble tRNA(Ala) and it encodes a 'tag peptide', a short internal open reading frame. During trans-translation Ala-aminoacylated tmRNA acts like a tRNA, entering the A-site of stalled ribosomes, displacing the stalled mRNA. The ribosome then switches to translate the ORF on the tmRNA; the nascent peptide is terminated with the 'tag peptide' encoded by the tmRNA and targeted for degradation. The ribosome is freed to recommence translation, which seems to be the essential function of trans-translation. The sequence is that of SsrA-binding protein from Flavobacterium psychrophilum (strain ATCC 49511 / DSM 21280 / CIP 103535 / JIP02/86).